We begin with the raw amino-acid sequence, 281 residues long: Pantothenate synthetase (281 aa).

Met26 to His33 contacts ATP. Residue His33 is the Proton donor of the active site. Position 57 (Gln57) interacts with (R)-pantoate. Gln57 is a beta-alanine binding site. Gly145 to Asp148 provides a ligand contact to ATP. (R)-pantoate is bound at residue Gln151. Met182–Arg185 is an ATP binding site.

Belongs to the pantothenate synthetase family. As to quaternary structure, homodimer.

It localises to the cytoplasm. The catalysed reaction is (R)-pantoate + beta-alanine + ATP = (R)-pantothenate + AMP + diphosphate + H(+). It functions in the pathway cofactor biosynthesis; (R)-pantothenate biosynthesis; (R)-pantothenate from (R)-pantoate and beta-alanine: step 1/1. Catalyzes the condensation of pantoate with beta-alanine in an ATP-dependent reaction via a pantoyl-adenylate intermediate. The sequence is that of Pantothenate synthetase from Idiomarina loihiensis (strain ATCC BAA-735 / DSM 15497 / L2-TR).